The chain runs to 299 residues: Protease HtpX homolog (299 aa).

2 helical membrane-spanning segments follow: residues 14–34 (IVLLIVFFMLLAAIGAAVGYL) and 39–59 (LVGGMAIALIIGFIYAFSMIF). Zn(2+) is bound at residue His-143. The active site involves Glu-144. His-147 serves as a coordination point for Zn(2+). Transmembrane regions (helical) follow at residues 158 to 178 (IAVALASAVTLISSIGGRMMW) and 198 to 218 (IILLIFSLLAIILAPLAASLV). Residue Glu-227 participates in Zn(2+) binding.

Belongs to the peptidase M48B family. Requires Zn(2+) as cofactor.

Its subcellular location is the cell membrane. The sequence is that of Protease HtpX homolog from Streptococcus mutans serotype c (strain ATCC 700610 / UA159).